The sequence spans 218 residues: Thiamine-phosphate synthase (218 aa).

Residues Q43 to K47 and N78 each bind 4-amino-2-methyl-5-(diphosphooxymethyl)pyrimidine. Mg(2+)-binding residues include D79 and D98. Residue S117 coordinates 4-amino-2-methyl-5-(diphosphooxymethyl)pyrimidine. T143–S145 is a binding site for 2-[(2R,5Z)-2-carboxy-4-methylthiazol-5(2H)-ylidene]ethyl phosphate. Residue K146 coordinates 4-amino-2-methyl-5-(diphosphooxymethyl)pyrimidine. 2-[(2R,5Z)-2-carboxy-4-methylthiazol-5(2H)-ylidene]ethyl phosphate is bound by residues G174 and I194–S195.

This sequence belongs to the thiamine-phosphate synthase family. Mg(2+) is required as a cofactor.

It catalyses the reaction 2-[(2R,5Z)-2-carboxy-4-methylthiazol-5(2H)-ylidene]ethyl phosphate + 4-amino-2-methyl-5-(diphosphooxymethyl)pyrimidine + 2 H(+) = thiamine phosphate + CO2 + diphosphate. The enzyme catalyses 2-(2-carboxy-4-methylthiazol-5-yl)ethyl phosphate + 4-amino-2-methyl-5-(diphosphooxymethyl)pyrimidine + 2 H(+) = thiamine phosphate + CO2 + diphosphate. The catalysed reaction is 4-methyl-5-(2-phosphooxyethyl)-thiazole + 4-amino-2-methyl-5-(diphosphooxymethyl)pyrimidine + H(+) = thiamine phosphate + diphosphate. Its pathway is cofactor biosynthesis; thiamine diphosphate biosynthesis; thiamine phosphate from 4-amino-2-methyl-5-diphosphomethylpyrimidine and 4-methyl-5-(2-phosphoethyl)-thiazole: step 1/1. In terms of biological role, condenses 4-methyl-5-(beta-hydroxyethyl)thiazole monophosphate (THZ-P) and 2-methyl-4-amino-5-hydroxymethyl pyrimidine pyrophosphate (HMP-PP) to form thiamine monophosphate (TMP). The polypeptide is Thiamine-phosphate synthase (Lactococcus lactis subsp. cremoris (strain SK11)).